A 234-amino-acid chain; its full sequence is Eosinophil granule major basic protein 2 (234 aa).

The signal sequence occupies residues 1 to 15; the sequence is MKLLLLLALLVGAVS. Positions 16 to 115 are cleaved as a propeptide — acidic; it reads TRHLNVDTSS…VKFEGSPGCK (100 aa). Residues 26 to 96 form a disordered region; the sequence is LQSLQGEESL…SSELDMGPED (71 aa). Ser69 carries O-linked (Xyl...) (glycosaminoglycan) serine glycosylation. Acidic residues predominate over residues 71–94; it reads SEDDPEEEEEEKEMESSSELDMGP. The C-type lectin domain maps to 133-234; it reads SVCQRCFRGN…GVRRAFSCSY (102 aa). 2 cysteine pairs are disulfide-bonded: Cys135-Cys232 and Cys209-Cys224.

In terms of processing, nitrated.

The protein localises to the cytoplasmic granule. MBP may play some important roles in the allergic reactions and inflammations, since MBP is capable of releasing histamine from mast cells and damaging the epithelial cells of bronchial tubes. Antiparasitic and antibiotic. This chain is Eosinophil granule major basic protein 2 (MBP2), found in Cavia porcellus (Guinea pig).